The primary structure comprises 183 residues: Capsid protein (183 aa).

Residues 143 to 183 (LPENAVVRRRGRSPRRRTPSPRRRRSQSPRRRRSQSRGSQC) form a disordered region. Residues 149–177 (VRRRGRSPRRRTPSPRRRRSQSPRRRRSQ) show a composition bias toward basic residues. Residues serine 155, serine 162, and serine 170 each carry the phosphoserine; by host modification. The 1; half-length repeat unit spans residues 155–161 (SPRRRTP). The segment at 155–177 (SPRRRTPSPRRRRSQSPRRRRSQ) is 3 X 8 AA repeats of S-P-R-R-R-[PR]-S-Q. Residues 158–175 (RRTPSPRRRRSQSPRRRR) carry the Bipartite nuclear localization signal motif. Repeat copies occupy residues 162–169 (SPRRRRSQ) and 170–177 (SPRRRRSQ). An RNA binding region spans residues 177 to 183 (QSRGSQC).

Belongs to the orthohepadnavirus core antigen family. As to quaternary structure, homodimerizes, then multimerizes. Interacts with cytosol exposed regions of viral L glycoprotein present in the reticulum-to-Golgi compartment. Interacts with human FLNB. Phosphorylated form interacts with host importin alpha; this interaction depends on the exposure of the NLS, which itself depends upon genome maturation and/or phosphorylation of the capsid protein. Interacts with host NUP153. Post-translationally, phosphorylated by host SRPK1, SRPK2, and maybe protein kinase C or GAPDH. Phosphorylation is critical for pregenomic RNA packaging. Protein kinase C phosphorylation is stimulated by HBx protein and may play a role in transport of the viral genome to the nucleus at the late step during the viral replication cycle.

The protein resides in the virion. It is found in the host cytoplasm. Self assembles to form an icosahedral capsid. Most capsids appear to be large particles with an icosahedral symmetry of T=4 and consist of 240 copies of capsid protein, though a fraction forms smaller T=3 particles consisting of 180 capsid proteins. Entering capsids are transported along microtubules to the nucleus. Phosphorylation of the capsid is thought to induce exposure of nuclear localization signal in the C-terminal portion of the capsid protein that allows binding to the nuclear pore complex via the importin (karyopherin-) alpha and beta. Capsids are imported in intact form through the nuclear pore into the nuclear basket, where it probably binds NUP153. Only capsids that contain the mature viral genome can release the viral DNA and capsid protein into the nucleoplasm. Immature capsids get stuck in the basket. Capsids encapsulate the pre-genomic RNA and the P protein. Pre-genomic RNA is reverse-transcribed into DNA while the capsid is still in the cytoplasm. The capsid can then either be directed to the nucleus, providing more genomes for transcription, or bud through the endoplasmic reticulum to provide new virions. This chain is Capsid protein, found in Homo sapiens (Human).